Reading from the N-terminus, the 173-residue chain is RNA pyrophosphohydrolase (173 aa).

Residues 6-149 (GFRANVGIIL…KRSVYRRALQ (144 aa)) form the Nudix hydrolase domain. A Nudix box motif is present at residues 38–59 (GGIDRGETPMDAMYRELWEEVG).

It belongs to the Nudix hydrolase family. RppH subfamily. A divalent metal cation serves as cofactor.

In terms of biological role, accelerates the degradation of transcripts by removing pyrophosphate from the 5'-end of triphosphorylated RNA, leading to a more labile monophosphorylated state that can stimulate subsequent ribonuclease cleavage. The protein is RNA pyrophosphohydrolase of Psychrobacter cryohalolentis (strain ATCC BAA-1226 / DSM 17306 / VKM B-2378 / K5).